The primary structure comprises 158 residues: Dysbindin domain-containing protein 1 (158 aa).

Disordered stretches follow at residues 1–50 (MEPP…VPAP) and 93–158 (ADSD…PQED). Residues Ser95 and Ser119 each carry the phosphoserine modification. The segment covering 125-141 (TRAEQSHEKQPLGDPER) has biased composition (basic and acidic residues).

It belongs to the dysbindin family.

In Homo sapiens (Human), this protein is Dysbindin domain-containing protein 1 (DBNDD1).